Consider the following 90-residue polypeptide: Probable acyl carrier protein (90 aa).

In terms of domain architecture, Carrier spans 9–90 (QVTVEELSAL…LVNGALKTGV (82 aa)). The residue at position 47 (Ser-47) is an O-(pantetheine 4'-phosphoryl)serine.

In terms of processing, 4'-phosphopantetheine is transferred from CoA to a specific serine of the apo-ACP-like protein.

Its function is as follows. Involved in developmentally regulated synthesis of a compound biosynthetically related to polyketide antibiotics which is essential for spore color in Streptomyces coelicolor. This chain is Probable acyl carrier protein, found in Streptomyces coelicolor (strain ATCC BAA-471 / A3(2) / M145).